We begin with the raw amino-acid sequence, 43 residues long: Protein PsbN (43 aa).

A helical transmembrane segment spans residues 4 to 24 (ATVLSITFAVILIAITGLAVY).

This sequence belongs to the PsbN family.

It is found in the cellular thylakoid membrane. In terms of biological role, may play a role in photosystem I and II biogenesis. The protein is Protein PsbN of Synechocystis sp. (strain ATCC 27184 / PCC 6803 / Kazusa).